We begin with the raw amino-acid sequence, 433 residues long: MGRVQLFEISLSHGRVVYSPGEPLAGTVRVRLGAPLPFRAIRVTCIGSCGVSNKANDTAWVVEEGYFNSSLSLADKGSLPAGEHSFPFQFLLPATAPTSFEGPFGKIVHQVRAAIHTPRFSKDHKCSLVFYILSPLNLNSIPDIEQPNVASATKKFSYKLVKTGSVVLTASTDLRGYVVGQALQLHADVENQSGKDTSPVVASLLQKVSYKAKRWIHDVRTIAEVEGAGVKAWRRAQWHEQILVPALPQSALPGCSLIHIDYYLQVSLKAPEATVTLPVFIGNIAVNHAPVSPRPGLGLPPGAPPLVVPSAPPQEEAEAEAAAGGPHFLDPVFLSTKSHSQRQPLLATLSSVPGAPEPCPQDGSPASHPLHPPLCISTGATVPYFAEGSGGPVPTTSTLILPPEYSSWGYPYEAPPSYEQSCGGVEPSLTPES.

Disordered stretches follow at residues 296–322 (GLGLPPGAPPLVVPSAPPQEEAEAEAA) and 349–372 (LSSVPGAPEPCPQDGSPASHPLHP). Positions 301–312 (PGAPPLVVPSAP) are enriched in pro residues. Short sequence motifs (PPxY motif) lie at residues 402–405 (PPEY) and 415–418 (PPSY).

It belongs to the arrestin family. Interacts (via PPxY motifs) with ITCH (via WW domains); the interaction is direct and participates in the recruitment of the ubiquitin-protein ligase ITCH to the NOTCH1 receptor. Interacts with ARRB1 and ARRB2; the interaction is direct. Interacts with TSG101; may recruit TSG101 to the plasma membrane. Interacts (via PPxY motifs) with WWP2 (via WW domains); ubiquitinates ARRDC1. Interacts with SLC11A2; controls the incorporation of SLC11A2 into extracellular vesicles through an ubiquitination-dependent mechanism. Interacts with WWP1 (via WW domains). Interacts with NEDD4 (via WW domains). Interacts with PDCD6IP. Post-translationally, ubiquitinated. Ubiquitination by WWP2; promotes localization to extracellular microvesicles. Ubiquitinated by WWP1.

It is found in the cell membrane. Functions as an adapter recruiting ubiquitin-protein ligases to their specific substrates. Through an ubiquitination-dependent mechanism plays for instance a role in the incorporation of SLC11A2 into extracellular vesicles. More generally, plays a role in the extracellular transport of proteins between cells through the release in the extracellular space of microvesicles. By participating in the ITCH-mediated ubiquitination and subsequent degradation of NOTCH1, negatively regulates the NOTCH signaling pathway. The polypeptide is Arrestin domain-containing protein 1 (Homo sapiens (Human)).